A 159-amino-acid chain; its full sequence is Small ribosomal subunit protein uS9 (159 aa).

The protein belongs to the universal ribosomal protein uS9 family.

This is Small ribosomal subunit protein uS9 from Rickettsia africae (strain ESF-5).